The chain runs to 364 residues: Cytoplasmic tRNA 2-thiolation protein 2 (364 aa).

The protein belongs to the CTU2/NCS2 family.

The protein localises to the cytoplasm. Its pathway is tRNA modification; 5-methoxycarbonylmethyl-2-thiouridine-tRNA biosynthesis. In terms of biological role, plays a central role in 2-thiolation of mcm(5)S(2)U at tRNA wobble positions of tRNA(Lys), tRNA(Glu) and tRNA(Gln). May act by forming a heterodimer with ncs6 that ligates sulfur from thiocarboxylated urm1 onto the uridine of tRNAs at wobble position. Prior mcm(5) tRNA modification by the elongator complex is required for 2-thiolation. May also be involved in protein urmylation. The protein is Cytoplasmic tRNA 2-thiolation protein 2 (ncs2) of Aspergillus fumigatus (strain CBS 144.89 / FGSC A1163 / CEA10) (Neosartorya fumigata).